The chain runs to 428 residues: 5'-deoxyadenosine deaminase (428 aa).

Residues histidine 59 and histidine 61 each coordinate Zn(2+). Substrate is bound by residues glutamate 88 and histidine 180. Residue histidine 207 participates in Zn(2+) binding. 2 residues coordinate substrate: glutamate 210 and aspartate 296. Aspartate 296 lines the Zn(2+) pocket.

It belongs to the metallo-dependent hydrolases superfamily. MTA/SAH deaminase family. As to quaternary structure, homotetramer. Zn(2+) is required as a cofactor.

The enzyme catalyses 5'-deoxyadenosine + H2O + H(+) = 5'-deoxyinosine + NH4(+). The catalysed reaction is S-adenosyl-L-homocysteine + H2O + H(+) = S-inosyl-L-homocysteine + NH4(+). It carries out the reaction S-methyl-5'-thioadenosine + H2O + H(+) = S-methyl-5'-thioinosine + NH4(+). It catalyses the reaction adenosine + H2O + H(+) = inosine + NH4(+). It functions in the pathway amino-acid biosynthesis; S-adenosyl-L-methionine biosynthesis. Functionally, catalyzes the deamination of three SAM-derived enzymatic products, namely 5'-deoxyadenosine, S-adenosyl-L-homocysteine, and 5'-methylthioadenosine, to produce the inosine analogs. Can also deaminate adenosine. The preferred substrate for this enzyme is 5'-deoxyadenosine, but all these substrates are efficiently deaminated. Likely functions in a S-adenosyl-L-methionine (SAM) recycling pathway from S-adenosyl-L-homocysteine (SAH) produced from SAM-dependent methylation reactions. May also be involved in the recycling of 5'-deoxyadenosine, whereupon the 5'-deoxyribose moiety of 5'-deoxyinosine is further metabolized to deoxyhexoses used for the biosynthesis of aromatic amino acids in methanogens. In Methanococcus aeolicus (strain ATCC BAA-1280 / DSM 17508 / OCM 812 / Nankai-3), this protein is 5'-deoxyadenosine deaminase.